Consider the following 290-residue polypeptide: Endoplasmic reticulum-Golgi intermediate compartment protein 1 (290 aa).

Topologically, residues 1-26 are cytoplasmic; it reads MPFDFRRFDIYRKVPKDLTQPTYTGA. A helical transmembrane segment spans residues 27-47; sequence IISICCCLFITFLFLSELTGF. At 48–254 the chain is on the lumenal side; it reads IANEIVNELY…RRQPMYRFIT (207 aa). N-linked (GlcNAc...) asparagine glycosylation occurs at Asn-74. The helical transmembrane segment at 255–275 threads the bilayer; the sequence is TVCAIIGGTFTVAGILDSFIF. Topologically, residues 276 to 290 are cytoplasmic; the sequence is TASEAWKKIQLGKMQ.

This sequence belongs to the ERGIC family.

The protein localises to the endoplasmic reticulum membrane. It is found in the endoplasmic reticulum-Golgi intermediate compartment membrane. Its subcellular location is the golgi apparatus membrane. Its function is as follows. Possible role in transport between endoplasmic reticulum and Golgi. This Xenopus laevis (African clawed frog) protein is Endoplasmic reticulum-Golgi intermediate compartment protein 1 (ergic1).